We begin with the raw amino-acid sequence, 397 residues long: S-layer protein B (397 aa).

The N-terminal stretch at Met-1–Ala-24 is a signal peptide. A coiled-coil region spans residues Ile-259–Thr-314. The chain crosses the membrane as a helical span at residues Gly-373 to Met-393.

Belongs to the Sulfolobales SlaB family. As to quaternary structure, the mushroom-shaped unit cells of the Sulfolobales' S-layers may consist of three SlaB subunits and six SlaA subunits.

It localises to the secreted. The protein resides in the cell wall. It is found in the S-layer. Its subcellular location is the cell membrane. Its function is as follows. S-layer small protein. May anchor the complex to the cell membrane. This is S-layer protein B from Saccharolobus solfataricus (strain ATCC 35092 / DSM 1617 / JCM 11322 / P2) (Sulfolobus solfataricus).